Here is a 215-residue protein sequence, read N- to C-terminus: Octanoyltransferase (215 aa).

Residues 31–206 enclose the BPL/LPL catalytic domain; the sequence is TDAPDEVWLV…QLVKHLDYAE (176 aa). Substrate is bound by residues 70–77, 137–139, and 150–152; these read RGGQVTYH, SLG, and GLA. Cys168 acts as the Acyl-thioester intermediate in catalysis.

It belongs to the LipB family.

The protein localises to the cytoplasm. It catalyses the reaction octanoyl-[ACP] + L-lysyl-[protein] = N(6)-octanoyl-L-lysyl-[protein] + holo-[ACP] + H(+). Its pathway is protein modification; protein lipoylation via endogenous pathway; protein N(6)-(lipoyl)lysine from octanoyl-[acyl-carrier-protein]: step 1/2. Its function is as follows. Catalyzes the transfer of endogenously produced octanoic acid from octanoyl-acyl-carrier-protein onto the lipoyl domains of lipoate-dependent enzymes. Lipoyl-ACP can also act as a substrate although octanoyl-ACP is likely to be the physiological substrate. The protein is Octanoyltransferase of Pseudomonas fluorescens (strain ATCC BAA-477 / NRRL B-23932 / Pf-5).